Here is a 172-residue protein sequence, read N- to C-terminus: Shikimate kinase (172 aa).

An ATP-binding site is contributed by 11–16; sequence GAGKST. Residue serine 15 coordinates Mg(2+). Residues aspartate 33, arginine 57, and glycine 79 each coordinate substrate. Arginine 117 lines the ATP pocket. Residue arginine 136 participates in substrate binding. Arginine 153 contributes to the ATP binding site.

It belongs to the shikimate kinase family. As to quaternary structure, monomer. Mg(2+) serves as cofactor.

The protein localises to the cytoplasm. The catalysed reaction is shikimate + ATP = 3-phosphoshikimate + ADP + H(+). The protein operates within metabolic intermediate biosynthesis; chorismate biosynthesis; chorismate from D-erythrose 4-phosphate and phosphoenolpyruvate: step 5/7. In terms of biological role, catalyzes the specific phosphorylation of the 3-hydroxyl group of shikimic acid using ATP as a cosubstrate. The polypeptide is Shikimate kinase (Pseudomonas fluorescens (strain Pf0-1)).